The following is a 181-amino-acid chain: Adenine phosphoribosyltransferase (181 aa).

The protein belongs to the purine/pyrimidine phosphoribosyltransferase family. Homodimer.

It is found in the cytoplasm. The enzyme catalyses AMP + diphosphate = 5-phospho-alpha-D-ribose 1-diphosphate + adenine. It participates in purine metabolism; AMP biosynthesis via salvage pathway; AMP from adenine: step 1/1. Functionally, catalyzes a salvage reaction resulting in the formation of AMP, that is energically less costly than de novo synthesis. This chain is Adenine phosphoribosyltransferase, found in Pseudoalteromonas translucida (strain TAC 125).